Reading from the N-terminus, the 288-residue chain is ATP synthase gamma chain (288 aa).

Belongs to the ATPase gamma chain family. In terms of assembly, F-type ATPases have 2 components, CF(1) - the catalytic core - and CF(0) - the membrane proton channel. CF(1) has five subunits: alpha(3), beta(3), gamma(1), delta(1), epsilon(1). CF(0) has three main subunits: a, b and c.

The protein localises to the cell inner membrane. Functionally, produces ATP from ADP in the presence of a proton gradient across the membrane. The gamma chain is believed to be important in regulating ATPase activity and the flow of protons through the CF(0) complex. The protein is ATP synthase gamma chain of Acidovorax ebreus (strain TPSY) (Diaphorobacter sp. (strain TPSY)).